A 264-amino-acid chain; its full sequence is tRNA pseudouridine synthase A (264 aa).

The Nucleophile role is filled by D51. Position 109 (Y109) interacts with substrate.

The protein belongs to the tRNA pseudouridine synthase TruA family. Homodimer.

The catalysed reaction is uridine(38/39/40) in tRNA = pseudouridine(38/39/40) in tRNA. Formation of pseudouridine at positions 38, 39 and 40 in the anticodon stem and loop of transfer RNAs. The sequence is that of tRNA pseudouridine synthase A from Staphylococcus aureus (strain MRSA252).